The sequence spans 151 residues: MQKTTRTMPAHKHVALVAHDNCKPELLRWVKENKEKLQRHFLYATGTTGHMLSKETGLAIKSMISGPMGGDQQLGALISEGKIDVLVFFWDPLNAVPHDPDVKALLRIASVWNIPVATNRATAKFLFDSPLLEQEVDIEVPDYEAYLAERM.

The region spanning 6–151 is the MGS-like domain; sequence RTMPAHKHVA…DYEAYLAERM (146 aa). Substrate contacts are provided by residues His-19, Lys-23, 45–48, and 65–66; these read TGTT and SG. The Proton donor/acceptor role is filled by Asp-71. His-98 provides a ligand contact to substrate.

Belongs to the methylglyoxal synthase family.

It catalyses the reaction dihydroxyacetone phosphate = methylglyoxal + phosphate. Catalyzes the formation of methylglyoxal from dihydroxyacetone phosphate. This Vibrio parahaemolyticus serotype O3:K6 (strain RIMD 2210633) protein is Methylglyoxal synthase.